We begin with the raw amino-acid sequence, 263 residues long: E3 ubiquitin-protein ligase SINA-like 8 (263 aa).

The RING-type; degenerate zinc-finger motif lies at Cys35–Pro71. Residues Ile75–Asn261 form an SBD region. The segment at Ser78–Ile136 adopts an SIAH-type zinc-finger fold. Residues Cys83, Cys90, His102, Cys106, Cys113, Cys118, His130, and His135 each contribute to the Zn(2+) site.

This sequence belongs to the SINA (Seven in absentia) family.

The enzyme catalyses S-ubiquitinyl-[E2 ubiquitin-conjugating enzyme]-L-cysteine + [acceptor protein]-L-lysine = [E2 ubiquitin-conjugating enzyme]-L-cysteine + N(6)-ubiquitinyl-[acceptor protein]-L-lysine.. It participates in protein modification; protein ubiquitination. In terms of biological role, E3 ubiquitin-protein ligase that mediates ubiquitination and subsequent proteasomal degradation of target proteins. E3 ubiquitin ligases accept ubiquitin from an E2 ubiquitin-conjugating enzyme in the form of a thioester and then directly transfers the ubiquitin to targeted substrates. It probably triggers the ubiquitin-mediated degradation of different substrates. The polypeptide is E3 ubiquitin-protein ligase SINA-like 8 (Arabidopsis thaliana (Mouse-ear cress)).